The following is a 238-amino-acid chain: Ribonuclease PH (238 aa).

Residues Arg-86 and 124–126 (GTR) each bind phosphate.

It belongs to the RNase PH family. As to quaternary structure, homohexameric ring arranged as a trimer of dimers.

It carries out the reaction tRNA(n+1) + phosphate = tRNA(n) + a ribonucleoside 5'-diphosphate. Its function is as follows. Phosphorolytic 3'-5' exoribonuclease that plays an important role in tRNA 3'-end maturation. Removes nucleotide residues following the 3'-CCA terminus of tRNAs; can also add nucleotides to the ends of RNA molecules by using nucleoside diphosphates as substrates, but this may not be physiologically important. Probably plays a role in initiation of 16S rRNA degradation (leading to ribosome degradation) during starvation. This chain is Ribonuclease PH, found in Vibrio cholerae serotype O1 (strain ATCC 39315 / El Tor Inaba N16961).